Here is a 414-residue protein sequence, read N- to C-terminus: Transcriptional repressor protein YY1 (414 aa).

Residues 1–170 are interaction with the SMAD1/SMAD4 complex; it reads MASGDTLYIA…SGGGASSGGG (170 aa). Low complexity predominate over residues 32–41; sequence PVETIETTVV. The tract at residues 32–83 is disordered; the sequence is PVETIETTVVGEEEEEDDDDEDGGGGDHGGGGGGHGHAGHHHHHHHHHHHHP. A compositionally biased stretch (acidic residues) spans 42 to 55; it reads GEEEEEDDDDEDGG. The span at 57–67 shows a compositional bias: gly residues; it reads GDHGGGGGGHG. Residues 68–83 show a composition bias toward basic residues; it reads HAGHHHHHHHHHHHHP. Positions 118-260 are gly-rich region involved in interaction with HCFC1; the sequence is DDSDGLRAED…YSEYMTGKKL (143 aa). Serine 120 carries the post-translational modification Phosphoserine. The disordered stretch occupies residues 159-203; the sequence is GKSGGGASSGGGRVKKGGGKKSGKKSYLGGGAGAAGGGGADPGNK. The segment covering 160–170 has biased composition (gly residues); sequence KSGGGASSGGG. Residues 171-182 show a composition bias toward basic residues; that stretch reads RVKKGGGKKSGK. Glycyl lysine isopeptide (Lys-Gly) (interchain with G-Cter in SUMO2) cross-links involve residues lysine 182 and lysine 183. The segment covering 186-199 has biased composition (gly residues); it reads LGGGAGAAGGGGAD. Residues lysine 208 and lysine 230 each participate in a glycyl lysine isopeptide (Lys-Gly) (interchain with G-Cter in SUMO2) cross-link. At serine 247 the chain carries Phosphoserine. Positions 257–341 are involved in nuclear matrix association; the sequence is GKKLPPGGIP…KAFVESSKLK (85 aa). Residues lysine 286 and lysine 288 each participate in a glycyl lysine isopeptide (Lys-Gly) (interchain with G-Cter in SUMO2) cross-link. The interval 295–414 is binding to DNA; the sequence is TIACPHKGCT…LTHAKAKNNQ (120 aa). 3 C2H2-type zinc fingers span residues 296–320, 325–347, and 353–377; these read IACPHKGCTKMFRDNSAMRKHLHTH, HVCAECGKAFVESSKLKRHQLVH, and FQCTFEGCGKRFSLDFNLRTHVRIH. Zn(2+)-binding residues include cysteine 298, cysteine 303, histidine 316, histidine 320, cysteine 327, cysteine 330, histidine 343, histidine 347, cysteine 355, cysteine 360, histidine 373, and histidine 377. The interval 333-371 is involved in repression of activated transcription; it reads AFVESSKLKRHQLVHTGEKPFQCTFEGCGKRFSLDFNLR. Residues 371 to 397 form an involved in masking transactivation domain region; sequence RTHVRIHTGDRPYVCPFDGCNKKFAQS. At threonine 378 the chain carries Phosphothreonine. Residues 383–407 form a C2H2-type 4 zinc finger; it reads YVCPFDGCNKKFAQSTNLKSHILTH. Zn(2+)-binding residues include cysteine 385, cysteine 390, histidine 403, and histidine 407. Residues lysine 409 and lysine 411 each participate in a glycyl lysine isopeptide (Lys-Gly) (interchain with G-Cter in SUMO2) cross-link.

It belongs to the YY transcription factor family. In terms of assembly, interacts with YAF2 through the region encompassing the first and second zinc fingers. Component of the chromatin remodeling INO80 complex; specifically part of a complex module associated with the DBINO domain of INO80. Interacts with EED and EZH2; the interactions are indicative for an association with the PRC2/EED-EZH2 complex. Found in a complex with SMAD1 and SMAD4. Interacts with SFMBT2. Found in a complex with YY1, SIN3A and HDAC1. Accessory component of the polycomb repressive deubiquitinase (PR-DUB) complex, at least composed of BAP1, one of ASXL1, ASXL2 or (probably) ASXL3 and one of MBD5 or MBD6; the PR-DUB core associates with a number of accessory proteins, including FOXK1, FOXK2, KDM1B, HCFC1, YY1 and OGT. Interacts (via Gly-rich region) with HCFC1; the interaction is direct. Interacts (via C-terminal zinc-finger domains) with BAP1 (via ULD domain); the interaction is direct and requires HCFC1. Transiently poly-ADP-ribosylated by PARP1 upon DNA damage, with the effect of decreasing affinity of YY1 to its cognate DNA binding sites. Post-translationally, ubiquitinated. In terms of processing, phosphorylation at Ser-120 by CK2 prevents proteolytic cleavage by caspase-7 (CASP7) during apoptosis. Proteolytically cleaved by caspase-7 (CASP7) in response to apoptosis. Phosphorylation at Ser-120 protects against proteolytic cleavage. Expressed in ovary and, at lower levels, in testis.

The protein resides in the nucleus. The protein localises to the nucleus matrix. It localises to the cytoplasm. In terms of biological role, multifunctional transcription factor that exhibits positive and negative control on a large number of cellular and viral genes by binding to sites overlapping the transcription start site. Binds to the consensus sequence 5'-CCGCCATNTT-3'; some genes have been shown to contain a longer binding motif allowing enhanced binding; the initial CG dinucleotide can be methylated greatly reducing the binding affinity. The effect on transcription regulation is depending upon the context in which it binds and diverse mechanisms of action include direct activation or repression, indirect activation or repression via cofactor recruitment, or activation or repression by disruption of binding sites or conformational DNA changes. Its activity is regulated by transcription factors and cytoplasmic proteins that have been shown to abrogate or completely inhibit YY1-mediated activation or repression. Binds to the upstream conserved region (UCR) (5'-CGCCATTTT-3') of Moloney murine leukemia virus (MuLV). Acts synergistically with the SMAD1 and SMAD4 in bone morphogenetic protein (BMP)-mediated cardiac-specific gene expression. Binds to SMAD binding elements (SBEs) (5'-GTCT/AGAC-3') within BMP response element (BMPRE) of cardiac activating regions. Proposed to recruit the PRC2/EED-EZH2 complex to target genes that are transcriptional repressed. Involved in DNA repair. In vitro, binds to DNA recombination intermediate structures (Holliday junctions). Involved in spermatogenesis and may play a role in meiotic DNA double-strand break repair. Plays a role in regulating enhancer activation. Recruits the PR-DUB complex to specific gene-regulatory regions. Its function is as follows. Proposed core component of the chromatin remodeling INO80 complex which is involved in transcriptional regulation, DNA replication and probably DNA repair; proposed to target the INO80 complex to YY1-responsive elements. This is Transcriptional repressor protein YY1 (Yy1) from Mus musculus (Mouse).